A 316-amino-acid chain; its full sequence is tRNA-cytidine(32) 2-sulfurtransferase (316 aa).

Positions 58–63 match the PP-loop motif motif; it reads SGGKDS. [4Fe-4S] cluster is bound by residues Cys-133, Cys-136, and Cys-224.

It belongs to the TtcA family. As to quaternary structure, homodimer. Requires Mg(2+) as cofactor. The cofactor is [4Fe-4S] cluster.

It localises to the cytoplasm. It catalyses the reaction cytidine(32) in tRNA + S-sulfanyl-L-cysteinyl-[cysteine desulfurase] + AH2 + ATP = 2-thiocytidine(32) in tRNA + L-cysteinyl-[cysteine desulfurase] + A + AMP + diphosphate + H(+). It participates in tRNA modification. Its function is as follows. Catalyzes the ATP-dependent 2-thiolation of cytidine in position 32 of tRNA, to form 2-thiocytidine (s(2)C32). The sulfur atoms are provided by the cysteine/cysteine desulfurase (IscS) system. The chain is tRNA-cytidine(32) 2-sulfurtransferase from Aromatoleum aromaticum (strain DSM 19018 / LMG 30748 / EbN1) (Azoarcus sp. (strain EbN1)).